We begin with the raw amino-acid sequence, 323 residues long: Lipoyl synthase (323 aa).

The interval 1 to 27 (MVTILDRTSSDEKRIRHPEKAHRPDTE) is disordered. 7 residues coordinate [4Fe-4S] cluster: C61, C66, C72, C87, C91, C94, and S300. The Radical SAM core domain occupies 73–289 (WEKKHATFMI…ETVAYAKGFL (217 aa)).

This sequence belongs to the radical SAM superfamily. Lipoyl synthase family. It depends on [4Fe-4S] cluster as a cofactor.

It is found in the cytoplasm. It catalyses the reaction [[Fe-S] cluster scaffold protein carrying a second [4Fe-4S](2+) cluster] + N(6)-octanoyl-L-lysyl-[protein] + 2 oxidized [2Fe-2S]-[ferredoxin] + 2 S-adenosyl-L-methionine + 4 H(+) = [[Fe-S] cluster scaffold protein] + N(6)-[(R)-dihydrolipoyl]-L-lysyl-[protein] + 4 Fe(3+) + 2 hydrogen sulfide + 2 5'-deoxyadenosine + 2 L-methionine + 2 reduced [2Fe-2S]-[ferredoxin]. It functions in the pathway protein modification; protein lipoylation via endogenous pathway; protein N(6)-(lipoyl)lysine from octanoyl-[acyl-carrier-protein]: step 2/2. In terms of biological role, catalyzes the radical-mediated insertion of two sulfur atoms into the C-6 and C-8 positions of the octanoyl moiety bound to the lipoyl domains of lipoate-dependent enzymes, thereby converting the octanoylated domains into lipoylated derivatives. The protein is Lipoyl synthase of Agrobacterium fabrum (strain C58 / ATCC 33970) (Agrobacterium tumefaciens (strain C58)).